A 195-amino-acid chain; its full sequence is Phosphoheptose isomerase (195 aa).

The SIS domain occupies 37 to 195 (ISDSFKQHGK…IEFEMAKIRQ (159 aa)). Substrate is bound at residue 52–54 (NGG). Positions 61 and 65 each coordinate Zn(2+). Substrate contacts are provided by residues glutamate 65, 93–94 (ND), 119–121 (STS), serine 124, and glutamine 172. The Zn(2+) site is built by glutamine 172 and histidine 180.

The protein belongs to the SIS family. GmhA subfamily. As to quaternary structure, homotetramer. Zn(2+) is required as a cofactor.

The protein localises to the cytoplasm. The catalysed reaction is 2 D-sedoheptulose 7-phosphate = D-glycero-alpha-D-manno-heptose 7-phosphate + D-glycero-beta-D-manno-heptose 7-phosphate. The protein operates within carbohydrate biosynthesis; D-glycero-D-manno-heptose 7-phosphate biosynthesis; D-glycero-alpha-D-manno-heptose 7-phosphate and D-glycero-beta-D-manno-heptose 7-phosphate from sedoheptulose 7-phosphate: step 1/1. In terms of biological role, catalyzes the isomerization of sedoheptulose 7-phosphate in D-glycero-D-manno-heptose 7-phosphate. The polypeptide is Phosphoheptose isomerase (Histophilus somni (strain 2336) (Haemophilus somnus)).